The chain runs to 264 residues: Thymidylate synthase (264 aa).

Arginine 21 contacts dUMP. Histidine 51 provides a ligand contact to (6R)-5,10-methylene-5,6,7,8-tetrahydrofolate. Position 126 to 127 (126 to 127 (RR)) interacts with dUMP. Cysteine 146 serves as the catalytic Nucleophile. Residues 166–169 (RSAD), asparagine 177, and 207–209 (HLY) contribute to the dUMP site. Aspartate 169 is a binding site for (6R)-5,10-methylene-5,6,7,8-tetrahydrofolate. Serine 263 is a binding site for (6R)-5,10-methylene-5,6,7,8-tetrahydrofolate.

The protein belongs to the thymidylate synthase family. Bacterial-type ThyA subfamily. Homodimer.

It localises to the cytoplasm. It carries out the reaction dUMP + (6R)-5,10-methylene-5,6,7,8-tetrahydrofolate = 7,8-dihydrofolate + dTMP. The protein operates within pyrimidine metabolism; dTTP biosynthesis. Its function is as follows. Catalyzes the reductive methylation of 2'-deoxyuridine-5'-monophosphate (dUMP) to 2'-deoxythymidine-5'-monophosphate (dTMP) while utilizing 5,10-methylenetetrahydrofolate (mTHF) as the methyl donor and reductant in the reaction, yielding dihydrofolate (DHF) as a by-product. This enzymatic reaction provides an intracellular de novo source of dTMP, an essential precursor for DNA biosynthesis. The polypeptide is Thymidylate synthase (Neisseria meningitidis serogroup B (strain ATCC BAA-335 / MC58)).